A 161-amino-acid polypeptide reads, in one-letter code: uncharacterized protein (161 aa).

Residues 76–94 (ISISSQCIFNVVILSFVFT) traverse the membrane as a helical segment.

The protein localises to the membrane. This is an uncharacterized protein from Saccharomyces cerevisiae (strain ATCC 204508 / S288c) (Baker's yeast).